The sequence spans 257 residues: Expansin-A10 (257 aa).

The N-terminal stretch at methionine 1–glycine 18 is a signal peptide. Residues glycine 50 to glycine 163 form the Expansin-like EG45 domain. One can recognise an Expansin-like CBD domain in the interval phenylalanine 173–glycine 252.

Belongs to the expansin family. Expansin A subfamily. In terms of tissue distribution, expressed in panicles and flowers.

The protein resides in the secreted. It localises to the cell wall. Its subcellular location is the membrane. Functionally, may cause loosening and extension of plant cell walls by disrupting non-covalent bonding between cellulose microfibrils and matrix glucans. No enzymatic activity has been found. May be required for rapid internodal elongation in deepwater rice during submergence. This chain is Expansin-A10 (EXPA10), found in Oryza sativa subsp. japonica (Rice).